The sequence spans 120 residues: MAAKPTPSVSVHIRLTVDPNKINEFLEISRPMFDAVTAEPLNTFFEMYRDDKTPGVFKLVENWDADIDYMMNVQVKKEYYTPYHTALREILLKPHEVELYSRMPGNEWAKLDVKRYVDQE.

The 91-residue stretch at Val9 to Leu99 folds into the ABM domain.

It belongs to the LsrG family.

The protein operates within secondary metabolite biosynthesis. Its function is as follows. Putative monooxygenase; part of the gene cluster that mediates the biosynthesis of dibenzodioxocinones such as pestalotiollide B, a novel class of inhibitors against cholesterol ester transfer protein (CEPT). The biosynthesis initiates from condensation of acetate and malonate units catalyzed by the non-reducing PKS pks8/GME11356. Pks8/GME11356 lacks a thioesterase (TE) domain, which is important to the cyclizing of the third ring of atrochrysone carboxylic acid, and the esterase GME11355 might play the role of TE and catalyzes the cyclization reaction of the C ring. The lactamase-like protein GME11357 (or other beta-lactamases in Pestalotiopsis microspora) probably hydrolyzes the thioester bond between the ACP of pks8/GME11356 and the intermediate to release atrochrysone carboxylic acid, which is spontaneously dehydrates to form endocrocin anthrone. Endocrocin anthrone is further converted to emodin via the endocrocin intermediate. Emodin is then oxidized by several enzymes such as the Baeyer-Villiger oxidase GME11358, the oxidoreductase GME11367, the short chain dehydrogenase/reductase GME11373, as well as by other oxidoreductases from the cluster, to modify the A and C rings and open the B ring, and finally yield monodictyphenone. The prenyltransferase GME11375 may catalyze the addition reaction between the C5 side chains and the carbon bone of dibenzodioxocinones. The remaining biochemical reactions to the final product dibenzodioxocinones should be methylation catalyzed by methyltransferase GME11366 and reduction and lactonization reaction catalyzed by a series of oxidordeuctases. The chain is Putative monooxygenase GME11364 from Pestalotiopsis microspora.